The primary structure comprises 166 residues: Endoribonuclease YbeY (166 aa).

Zn(2+) is bound by residues His126, His130, and His136.

Belongs to the endoribonuclease YbeY family. It depends on Zn(2+) as a cofactor.

It localises to the cytoplasm. Its function is as follows. Single strand-specific metallo-endoribonuclease involved in late-stage 70S ribosome quality control and in maturation of the 3' terminus of the 16S rRNA. This chain is Endoribonuclease YbeY, found in Laribacter hongkongensis (strain HLHK9).